Reading from the N-terminus, the 658-residue chain is Outer dynein arm-docking complex subunit 1 (658 aa).

Coiled coils occupy residues 11-156 (KEVH…RYLN), 186-234 (REEA…KNDE), and 303-380 (NFIN…TDIQ). Disordered regions lie at residues 496–552 (DEEE…SVSH) and 574–658 (GAPV…RGYN). A phosphoserine mark is found at Ser500, Ser506, Ser507, and Ser509. Composition is skewed to low complexity over residues 506 to 519 (SSPSLTLSSPQISL), 574 to 583 (GAPVSSRSSQ), 592 to 604 (TSSSSYLGSTGYL), and 621 to 639 (SMGSELSRGLSSSSGHASS).

It belongs to the ODA1/DCC2 family. In terms of assembly, component of the outer dynein arm-docking complex along with ODAD2, ODAD3, ODAD4 and CLXN. Interacts with ODAD3. Interacts with ODAD4; this interaction may facilitate the recruitment and/or attachment of outer dynein arm docking complex proteins including ODAD1, ODAD3, and ODAD4 to ciliary axonemes. Interacts with DNAH9. Interacts with MNS1. Interacts with PIERCE1 and PIERCE2; the interactions link the outer dynein arms docking complex (ODA-DC) to the internal microtubule inner proteins (MIP) in cilium axoneme. Expressed in motile ciliated tissues.

It is found in the cytoplasm. The protein localises to the cytoskeleton. Its subcellular location is the cilium axoneme. In terms of biological role, component of the outer dynein arm-docking complex that mediates outer dynein arms (ODA) binding onto the doublet microtubule. Involved in mediating assembly of both ODAs and their axonemal docking complex onto ciliary microtubules. The polypeptide is Outer dynein arm-docking complex subunit 1 (Odad1) (Mus musculus (Mouse)).